Here is a 27-residue protein sequence, read N- to C-terminus: Ferric reductase B (27 aa).

As to quaternary structure, homodimer. It depends on FAD as a cofactor.

It carries out the reaction 2 a Fe(II)-siderophore + NAD(+) + H(+) = 2 a Fe(III)-siderophore + NADH. Functionally, reductase activity that acts on Fe(3+)-chelates and uses both NADH and NADPH as electron donors. May play a role in iron uptake. The chain is Ferric reductase B (ferB) from Paracoccus denitrificans.